The following is a 122-amino-acid chain: Large ribosomal subunit protein uL14 (122 aa).

It belongs to the universal ribosomal protein uL14 family. In terms of assembly, part of the 50S ribosomal subunit. Forms a cluster with proteins L3 and L19. In the 70S ribosome, L14 and L19 interact and together make contacts with the 16S rRNA in bridges B5 and B8.

Binds to 23S rRNA. Forms part of two intersubunit bridges in the 70S ribosome. The sequence is that of Large ribosomal subunit protein uL14 from Syntrophus aciditrophicus (strain SB).